The primary structure comprises 446 residues: Glutamine synthetase (446 aa).

Residues 15 to 103 (ENVKFLRLQI…LICDVYYPDG (89 aa)) enclose the GS beta-grasp domain. The 337-residue stretch at 110 to 446 (PRYVLKRQIE…WELDRYLATY (337 aa)) folds into the GS catalytic domain. Mg(2+)-binding residues include glutamate 134 and glutamate 136. Residue glutamate 186 participates in ATP binding. 2 residues coordinate Mg(2+): glutamate 191 and glutamate 198. L-glutamate contacts are provided by residues 242-243 (NG) and glycine 243. A Mg(2+)-binding site is contributed by histidine 247. Serine 251 contributes to the ATP binding site. Positions 300, 306, and 318 each coordinate L-glutamate. Residues arginine 318 and arginine 323 each coordinate ATP. Glutamate 335 provides a ligand contact to Mg(2+). Arginine 337 contacts L-glutamate.

Belongs to the glutamine synthetase family. As to quaternary structure, interacts with GCBP (TTHA1554). The cofactor is Mg(2+).

The protein resides in the cytoplasm. The catalysed reaction is L-glutamate + NH4(+) + ATP = L-glutamine + ADP + phosphate + H(+). Activity increases by approximately two-fold in the presence of GCBP. Catalyzes the ATP-dependent biosynthesis of glutamine from glutamate and ammonia. The sequence is that of Glutamine synthetase from Thermus thermophilus (strain ATCC 27634 / DSM 579 / HB8).